Reading from the N-terminus, the 78-residue chain is MKLTCVMIVAVLFLTAWTFATADDPRNGLGNLFSNAHHEMKNPEASKLNKRWCKQSGEMCNLLDQNCCEGYCIVLVCT.

The first 22 residues, 1 to 22 (MKLTCVMIVAVLFLTAWTFATA), serve as a signal peptide directing secretion. Residues 23-49 (DDPRNGLGNLFSNAHHEMKNPEASKLN) constitute a propeptide that is removed on maturation. 3 cysteine pairs are disulfide-bonded: Cys-53-Cys-68, Cys-60-Cys-72, and Cys-67-Cys-77.

Belongs to the conotoxin O1 superfamily. As to expression, expressed by the venom duct.

It is found in the secreted. Delta-conotoxins bind to site 6 of voltage-gated sodium channels (Nav) and inhibit the inactivation process. This Conus ammiralis (Admiral cone) protein is Delta-conotoxin-like Ai6.1.